The sequence spans 497 residues: Probable cytosol aminopeptidase (497 aa).

Positions 263 and 268 each coordinate Mn(2+). Lys-275 is an active-site residue. 3 residues coordinate Mn(2+): Asp-286, Asp-345, and Glu-347. Residue Arg-349 is part of the active site.

It belongs to the peptidase M17 family. The cofactor is Mn(2+).

It is found in the cytoplasm. It carries out the reaction Release of an N-terminal amino acid, Xaa-|-Yaa-, in which Xaa is preferably Leu, but may be other amino acids including Pro although not Arg or Lys, and Yaa may be Pro. Amino acid amides and methyl esters are also readily hydrolyzed, but rates on arylamides are exceedingly low.. It catalyses the reaction Release of an N-terminal amino acid, preferentially leucine, but not glutamic or aspartic acids.. Functionally, presumably involved in the processing and regular turnover of intracellular proteins. Catalyzes the removal of unsubstituted N-terminal amino acids from various peptides. The chain is Probable cytosol aminopeptidase from Sinorhizobium medicae (strain WSM419) (Ensifer medicae).